The chain runs to 50 residues: MKGDPKVIDYLNKALRHELTAINQYWLHYRLLDNWGIKDLAKKWRAESIE.

The Ferritin-like diiron domain maps to 1–50; it reads MKGDPKVIDYLNKALRHELTAINQYWLHYRLLDNWGIKDLAKKWRAESIE. Glu18 lines the Fe cation pocket.

The protein belongs to the bacterioferritin family. In terms of assembly, homooligomer of 24 subunits, arranged as 12 dimers, that are packed together to form an approximately spherical molecule with a central cavity, in which large amounts of iron can be deposited. The cofactor is heme b.

It carries out the reaction 4 Fe(2+) + O2 + 4 H(+) = 4 Fe(3+) + 2 H2O. The catalysed reaction is Fe(2+)(in) = Fe(2+)(out). Functionally, iron-storage protein, whose ferroxidase center binds Fe(2+), oxidizes it using dioxygen to Fe(3+), and participates in the subsequent Fe(3+) oxide mineral core formation within the central cavity of the BFR protein shell. May act as one of the electron carriers in the reverse electron-transport system from cytochrome c-552 to NADP(+). The chain is Bacterioferritin (bfr) from Nitrobacter winogradskyi (Nitrobacter agilis).